Reading from the N-terminus, the 374-residue chain is UPF0754 membrane protein SA1664 (374 aa).

The next 2 membrane-spanning stretches (helical) occupy residues Leu-4 to Ile-24 and Ser-354 to Val-374.

The protein belongs to the UPF0754 family.

It is found in the cell membrane. The protein is UPF0754 membrane protein SA1664 of Staphylococcus aureus (strain N315).